We begin with the raw amino-acid sequence, 355 residues long: uncharacterized protein (355 aa).

Residues 1–61 (MNKKIEKNNN…PKRRGRRPKK (61 aa)) are disordered. A compositionally biased stretch (polar residues) spans 18 to 37 (YESNTTDNQLIMKKNANSGS).

This is an uncharacterized protein from Acanthamoeba polyphaga mimivirus (APMV).